Here is a 422-residue protein sequence, read N- to C-terminus: Enolase (422 aa).

Residue glutamine 162 participates in (2R)-2-phosphoglycerate binding. Glutamate 204 (proton donor) is an active-site residue. Mg(2+) contacts are provided by aspartate 241, glutamate 284, and aspartate 311. Residues lysine 336, arginine 365, serine 366, and lysine 387 each coordinate (2R)-2-phosphoglycerate. Lysine 336 functions as the Proton acceptor in the catalytic mechanism.

Belongs to the enolase family. Component of the RNA degradosome, a multiprotein complex involved in RNA processing and mRNA degradation. It depends on Mg(2+) as a cofactor.

The protein localises to the cytoplasm. The protein resides in the secreted. It localises to the cell surface. The enzyme catalyses (2R)-2-phosphoglycerate = phosphoenolpyruvate + H2O. It functions in the pathway carbohydrate degradation; glycolysis; pyruvate from D-glyceraldehyde 3-phosphate: step 4/5. In terms of biological role, catalyzes the reversible conversion of 2-phosphoglycerate (2-PG) into phosphoenolpyruvate (PEP). It is essential for the degradation of carbohydrates via glycolysis. The chain is Enolase from Legionella pneumophila (strain Corby).